Consider the following 381-residue polypeptide: Alkanesulfonate monooxygenase (381 aa).

The protein belongs to the SsuD family. In terms of assembly, homotetramer.

The enzyme catalyses an alkanesulfonate + FMNH2 + O2 = an aldehyde + FMN + sulfite + H2O + 2 H(+). Functionally, catalyzes the desulfonation of aliphatic sulfonates. The polypeptide is Alkanesulfonate monooxygenase (Escherichia coli O17:K52:H18 (strain UMN026 / ExPEC)).